Reading from the N-terminus, the 482-residue chain is Bifunctional protein GlmU (482 aa).

The segment at 1-238 (MSAIRPAAVV…HREIAGINNR (238 aa)) is pyrophosphorylase. UDP-N-acetyl-alpha-D-glucosamine-binding positions include 12–15 (LAAG), Lys26, Gln79, and 84–85 (GT). Residue Asp110 coordinates Mg(2+). UDP-N-acetyl-alpha-D-glucosamine-binding residues include Gly147, Glu163, Asn178, and Asn236. Asn236 is a binding site for Mg(2+). The interval 239-259 (VQLAEARRILNDRLLTGAMLA) is linker. An N-acetyltransferase region spans residues 260–482 (GVTVVDPATT…AVSREADGED (223 aa)). 2 residues coordinate UDP-N-acetyl-alpha-D-glucosamine: Arg341 and Lys359. His371 serves as the catalytic Proton acceptor. The UDP-N-acetyl-alpha-D-glucosamine site is built by Tyr374 and Asn385. Acetyl-CoA-binding positions include Ala388, 394–395 (NY), Ser413, Ala431, and Arg448. Residues 460–482 (RKRPGSAAAKAAEAVSREADGED) are disordered. Positions 464–473 (GSAAAKAAEA) are enriched in low complexity.

It in the N-terminal section; belongs to the N-acetylglucosamine-1-phosphate uridyltransferase family. The protein in the C-terminal section; belongs to the transferase hexapeptide repeat family. In terms of assembly, homotrimer. It depends on Mg(2+) as a cofactor.

The protein resides in the cytoplasm. It carries out the reaction alpha-D-glucosamine 1-phosphate + acetyl-CoA = N-acetyl-alpha-D-glucosamine 1-phosphate + CoA + H(+). The catalysed reaction is N-acetyl-alpha-D-glucosamine 1-phosphate + UTP + H(+) = UDP-N-acetyl-alpha-D-glucosamine + diphosphate. It functions in the pathway nucleotide-sugar biosynthesis; UDP-N-acetyl-alpha-D-glucosamine biosynthesis; N-acetyl-alpha-D-glucosamine 1-phosphate from alpha-D-glucosamine 6-phosphate (route II): step 2/2. The protein operates within nucleotide-sugar biosynthesis; UDP-N-acetyl-alpha-D-glucosamine biosynthesis; UDP-N-acetyl-alpha-D-glucosamine from N-acetyl-alpha-D-glucosamine 1-phosphate: step 1/1. Its pathway is bacterial outer membrane biogenesis; LPS lipid A biosynthesis. In terms of biological role, catalyzes the last two sequential reactions in the de novo biosynthetic pathway for UDP-N-acetylglucosamine (UDP-GlcNAc). The C-terminal domain catalyzes the transfer of acetyl group from acetyl coenzyme A to glucosamine-1-phosphate (GlcN-1-P) to produce N-acetylglucosamine-1-phosphate (GlcNAc-1-P), which is converted into UDP-GlcNAc by the transfer of uridine 5-monophosphate (from uridine 5-triphosphate), a reaction catalyzed by the N-terminal domain. This chain is Bifunctional protein GlmU, found in Streptomyces coelicolor (strain ATCC BAA-471 / A3(2) / M145).